The sequence spans 152 residues: Ribosome maturation factor RimP (152 aa).

It belongs to the RimP family.

The protein resides in the cytoplasm. Functionally, required for maturation of 30S ribosomal subunits. This chain is Ribosome maturation factor RimP, found in Burkholderia multivorans (strain ATCC 17616 / 249).